The following is a 339-amino-acid chain: UDP-3-O-acylglucosamine N-acyltransferase (339 aa).

Histidine 251 acts as the Proton acceptor in catalysis.

The protein belongs to the transferase hexapeptide repeat family. LpxD subfamily. As to quaternary structure, homotrimer.

The catalysed reaction is a UDP-3-O-[(3R)-3-hydroxyacyl]-alpha-D-glucosamine + a (3R)-hydroxyacyl-[ACP] = a UDP-2-N,3-O-bis[(3R)-3-hydroxyacyl]-alpha-D-glucosamine + holo-[ACP] + H(+). It functions in the pathway bacterial outer membrane biogenesis; LPS lipid A biosynthesis. In terms of biological role, catalyzes the N-acylation of UDP-3-O-acylglucosamine using 3-hydroxyacyl-ACP as the acyl donor. Is involved in the biosynthesis of lipid A, a phosphorylated glycolipid that anchors the lipopolysaccharide to the outer membrane of the cell. The sequence is that of UDP-3-O-acylglucosamine N-acyltransferase from Paramagnetospirillum magneticum (strain ATCC 700264 / AMB-1) (Magnetospirillum magneticum).